The chain runs to 59 residues: Embryonic testis differentiation protein homolog C (59 aa).

The tract at residues 1–22 (MDKELPKASPSEPALNIKKSGK) is disordered.

The protein is Embryonic testis differentiation protein homolog C of Homo sapiens (Human).